The sequence spans 619 residues: 2-succinyl-5-enolpyruvyl-6-hydroxy-3-cyclohexene-1-carboxylate synthase (619 aa).

Over residues 385–398 the composition is skewed to polar residues; the sequence is SSAHQSLAATNSDS. The segment at 385-415 is disordered; it reads SSAHQSLAATNSDSSTDDIIENTDEEGSNES. Positions 399–413 are enriched in acidic residues; that stretch reads STDDIIENTDEEGSN.

This sequence belongs to the TPP enzyme family. MenD subfamily. In terms of assembly, homodimer. Mg(2+) is required as a cofactor. Requires Mn(2+) as cofactor. The cofactor is thiamine diphosphate.

The enzyme catalyses isochorismate + 2-oxoglutarate + H(+) = 5-enolpyruvoyl-6-hydroxy-2-succinyl-cyclohex-3-ene-1-carboxylate + CO2. Its pathway is quinol/quinone metabolism; 1,4-dihydroxy-2-naphthoate biosynthesis; 1,4-dihydroxy-2-naphthoate from chorismate: step 2/7. It functions in the pathway quinol/quinone metabolism; menaquinone biosynthesis. Catalyzes the thiamine diphosphate-dependent decarboxylation of 2-oxoglutarate and the subsequent addition of the resulting succinic semialdehyde-thiamine pyrophosphate anion to isochorismate to yield 2-succinyl-5-enolpyruvyl-6-hydroxy-3-cyclohexene-1-carboxylate (SEPHCHC). This is 2-succinyl-5-enolpyruvyl-6-hydroxy-3-cyclohexene-1-carboxylate synthase from Haloquadratum walsbyi (strain DSM 16790 / HBSQ001).